Here is a 191-residue protein sequence, read N- to C-terminus: Thymidine kinase (191 aa).

ATP is bound by residues 9–16 (GSMNSGKT) and 85–88 (DESQ). The active-site Proton acceptor is Glu86. Residues Cys143, Cys146, Cys181, and Cys184 each contribute to the Zn(2+) site.

This sequence belongs to the thymidine kinase family. As to quaternary structure, homotetramer.

The protein resides in the cytoplasm. It carries out the reaction thymidine + ATP = dTMP + ADP + H(+). In Listeria monocytogenes serotype 4b (strain F2365), this protein is Thymidine kinase.